We begin with the raw amino-acid sequence, 134 residues long: Small ribosomal subunit protein uS8c (134 aa).

The protein belongs to the universal ribosomal protein uS8 family. As to quaternary structure, part of the 30S ribosomal subunit.

The protein localises to the plastid. The protein resides in the chloroplast. Its function is as follows. One of the primary rRNA binding proteins, it binds directly to 16S rRNA central domain where it helps coordinate assembly of the platform of the 30S subunit. This is Small ribosomal subunit protein uS8c (rps8) from Gossypium barbadense (Sea Island cotton).